The chain runs to 189 residues: MTTDVRILGIDPGLRRTGWGLITARGTKLSYLACGVVTSDGDLPLALRLRELHEGLTRVLTTHAPDEVSVEETFVNKDAQATLKLGHARAVALLVPALAGLPVAEYAANLVKKTVAGNGHAEKVQIQAMVKFLLPKAEFKLADAADALAIAITHASHRGAIALDRRHAVAAGSGPGAARIAAALARLDR.

Active-site residues include D11, E71, and D143. Mg(2+)-binding residues include D11, E71, and D143.

The protein belongs to the RuvC family. Homodimer which binds Holliday junction (HJ) DNA. The HJ becomes 2-fold symmetrical on binding to RuvC with unstacked arms; it has a different conformation from HJ DNA in complex with RuvA. In the full resolvosome a probable DNA-RuvA(4)-RuvB(12)-RuvC(2) complex forms which resolves the HJ. Mg(2+) is required as a cofactor.

It localises to the cytoplasm. It catalyses the reaction Endonucleolytic cleavage at a junction such as a reciprocal single-stranded crossover between two homologous DNA duplexes (Holliday junction).. Its function is as follows. The RuvA-RuvB-RuvC complex processes Holliday junction (HJ) DNA during genetic recombination and DNA repair. Endonuclease that resolves HJ intermediates. Cleaves cruciform DNA by making single-stranded nicks across the HJ at symmetrical positions within the homologous arms, yielding a 5'-phosphate and a 3'-hydroxyl group; requires a central core of homology in the junction. The consensus cleavage sequence is 5'-(A/T)TT(C/G)-3'. Cleavage occurs on the 3'-side of the TT dinucleotide at the point of strand exchange. HJ branch migration catalyzed by RuvA-RuvB allows RuvC to scan DNA until it finds its consensus sequence, where it cleaves and resolves the cruciform DNA. The chain is Crossover junction endodeoxyribonuclease RuvC from Methylorubrum populi (strain ATCC BAA-705 / NCIMB 13946 / BJ001) (Methylobacterium populi).